The chain runs to 203 residues: Proteasome subunit beta 2 (203 aa).

Positions 1 to 9 (MGEEFQVGA) are cleaved as a propeptide — removed in mature form; by autocatalysis. Catalysis depends on threonine 10, which acts as the Nucleophile.

It belongs to the peptidase T1B family. The 20S proteasome core is composed of 14 alpha and 14 beta subunits that assemble into four stacked heptameric rings, resulting in a barrel-shaped structure. The two inner rings, each composed of seven catalytic beta subunits, are sandwiched by two outer rings, each composed of seven alpha subunits. The catalytic chamber with the active sites is on the inside of the barrel. Has a gated structure, the ends of the cylinder being occluded by the N-termini of the alpha-subunits. Is capped at one or both ends by the proteasome regulatory ATPase, PAN.

The protein resides in the cytoplasm. It catalyses the reaction Cleavage of peptide bonds with very broad specificity.. Its activity is regulated as follows. The formation of the proteasomal ATPase PAN-20S proteasome complex, via the docking of the C-termini of PAN into the intersubunit pockets in the alpha-rings, triggers opening of the gate for substrate entry. Interconversion between the open-gate and close-gate conformations leads to a dynamic regulation of the 20S proteasome proteolysis activity. In terms of biological role, component of the proteasome core, a large protease complex with broad specificity involved in protein degradation. This is Proteasome subunit beta 2 from Pyrobaculum neutrophilum (strain DSM 2338 / JCM 9278 / NBRC 100436 / V24Sta) (Thermoproteus neutrophilus).